A 23-amino-acid polypeptide reads, in one-letter code: Retinol-binding protein 3 (23 aa).

The protein localises to the secreted. The protein resides in the extracellular space. It is found in the extracellular matrix. It localises to the interphotoreceptor matrix. IRBP shuttles 11-cis and all trans retinoids between the retinol isomerase in the pigment epithelium and the visual pigments in the photoreceptor cells of the retina. The sequence is that of Retinol-binding protein 3 (RBP3) from Oryctolagus cuniculus (Rabbit).